Consider the following 545-residue polypeptide: Endo-beta-N-acetylglucosaminidase (545 aa).

The first 36 residues, 1 to 36 (MTFIKQMMPRYVASMTAGIVAAAMAATCAFAPVANA), serve as a signal peptide directing secretion. The 283-residue stretch at 51–333 (RHFMVYYRAW…EDLRRIVPSN (283 aa)) folds into the GH18 domain. Glu184 acts as the Proton donor in catalysis. Residues 486-511 (PVPTPDSTDQNGNRDKVTNHKVQGQP) form a disordered region. Residues 518–538 (GISTDIIVAVGVTLAIAGVAL) traverse the membrane as a helical segment.

This sequence belongs to the glycosyl hydrolase 18 family.

The protein resides in the cell membrane. The catalysed reaction is an N(4)-(oligosaccharide-(1-&gt;3)-[oligosaccharide-(1-&gt;6)]-beta-D-Man-(1-&gt;4)-beta-D-GlcNAc-(1-&gt;4)-alpha-D-GlcNAc)-L-asparaginyl-[protein] + H2O = an oligosaccharide-(1-&gt;3)-[oligosaccharide-(1-&gt;6)]-beta-D-Man-(1-&gt;4)-D-GlcNAc + N(4)-(N-acetyl-beta-D-glucosaminyl)-L-asparaginyl-[protein]. Functionally, endoglycosidase with broad specificity that cleaves the chitobiose core of high mannose and complex N-linked glycans. Is able to release N-glycans from diverse host glycoproteins such as human and bovine lactoferrin, immunoglobulins A and G, and ribonuclease B. Is active directly on human breast milk - a complex matrix of lipids, oligosaccharides, and proteins with disparate glycosylation types - successfully removing a significant proportion of the total amount of N-glycans. Does not recognize O-linked glycans or free human milk oligosaccharides (HMO). The protein is Endo-beta-N-acetylglucosaminidase of Bifidobacterium longum subsp. infantis (strain ATCC 15697 / DSM 20088 / JCM 1222 / NCTC 11817 / S12).